Consider the following 1046-residue polypeptide: FERM, ARHGEF and pleckstrin domain-containing protein 1 (1046 aa).

Positions Ile-40–Glu-320 constitute an FERM domain. The interval Leu-374 to Ser-522 is disordered. Residues Lys-413–Gln-424 show a composition bias toward basic and acidic residues. Polar residues predominate over residues Arg-458 to Leu-513. In terms of domain architecture, DH spans Lys-541–Asn-732. In terms of domain architecture, PH 1 spans Glu-761–Asp-858. The tract at residues Ser-864–His-907 is disordered. The segment covering Thr-884–Leu-894 has biased composition (acidic residues). The 98-residue stretch at Glu-933–Ser-1030 folds into the PH 2 domain.

As to quaternary structure, interacts with PLXNA4. In terms of tissue distribution, detected in lateral motor column motor neurons and in preganglionic autonomic motor neurons of the column of Terni in the embryonic spinal cord (at protein level).

Its subcellular location is the cell membrane. The protein resides in the synapse. It localises to the synaptosome. The protein localises to the cytoplasm. It is found in the cytosol. Its subcellular location is the cell projection. The protein resides in the filopodium. It localises to the dendrite. The protein localises to the dendritic spine. In terms of biological role, functions as a guanine nucleotide exchange factor for RAC1. Plays a role in semaphorin signaling via its interaction with PLXNA4. Plays a role in the assembly and disassembly of dendritic filopodia, the formation of dendritic spines, regulation of dendrite length and ultimately the formation of synapses. The chain is FERM, ARHGEF and pleckstrin domain-containing protein 1 (FARP1) from Gallus gallus (Chicken).